The following is a 455-amino-acid chain: Ribulose bisphosphate carboxylase large chain (455 aa).

At Lys5 the chain carries N6,N6,N6-trimethyllysine. The substrate site is built by Asn114 and Thr164. Lys166 serves as the catalytic Proton acceptor. Lys168 is a substrate binding site. The Mg(2+) site is built by Lys192, Asp194, and Glu195. Lys192 carries the post-translational modification N6-carboxylysine. His285 functions as the Proton acceptor in the catalytic mechanism. 3 residues coordinate substrate: Arg286, His318, and Ser370.

It belongs to the RuBisCO large chain family. Type I subfamily. As to quaternary structure, heterohexadecamer of 8 large chains and 8 small chains; disulfide-linked. The disulfide link is formed within the large subunit homodimers. Mg(2+) is required as a cofactor. The disulfide bond which can form in the large chain dimeric partners within the hexadecamer appears to be associated with oxidative stress and protein turnover.

The protein localises to the plastid. It is found in the chloroplast. The catalysed reaction is 2 (2R)-3-phosphoglycerate + 2 H(+) = D-ribulose 1,5-bisphosphate + CO2 + H2O. It carries out the reaction D-ribulose 1,5-bisphosphate + O2 = 2-phosphoglycolate + (2R)-3-phosphoglycerate + 2 H(+). RuBisCO catalyzes two reactions: the carboxylation of D-ribulose 1,5-bisphosphate, the primary event in carbon dioxide fixation, as well as the oxidative fragmentation of the pentose substrate in the photorespiration process. Both reactions occur simultaneously and in competition at the same active site. The protein is Ribulose bisphosphate carboxylase large chain of Lupinus latifolius (Broad-leaved lupine).